A 65-amino-acid polypeptide reads, in one-letter code: Protein C13 (65 aa).

The protein belongs to the poxviridae C13 protein family.

This is Protein C13 from Vaccinia virus (strain Copenhagen) (VACV).